Consider the following 629-residue polypeptide: MALTNGRIEEYDIQNGYQNTEEIKKLPAELNFPVDFDKMPTFIFQEERQKLDLPLSDSEENQFHDFSDSKLSLGFEIGRSKEKFVDEKPFYSNKEPLKINSWKKSSSHPKSKEVSNGLLKVSTPPTEFVKRENAGIRRRSSNQGSFALEAPKILKRDAMFKESWKNKCFISPQKDNQGFSKSKHLSTYEGETENGFSTSTEEEEEEEEDIVSASWVDNLDMDMASFNSHRERFLTEHVNMDERSDDDFLLGLISSDSSVDDHDNEQDDVDLIGWECFFDDSSDELNTLSHQADDEGDTTDEETPELQNNKLLNLSTPKKSFGQTPRIKTELSESPNSQRTLLSAVPTPLELSAELAYKEDLTSLASRANISDNSTGLTPTLAKATLAQPVSTVVSVASFELDPRLNITQPKPPVMGTWAKEPNHLIGIIDGKHSHSLHHDKFDACTKGENTANNGYGPQTLNETSEEPSLDDILDTSLLQPSTQTDLQEENSVSFAQEDNSLSRWEKIPIGTFRKNQYIKSMARRDELIRDEWFTLAIKTREKRRHKINATGMTTTNSVPLRPKSRKARRALKKKARKMTFRQMHSDFQSALEDEHNDGSYLDNDYETVGLGLGPELSPLFEILESSGY.

Disordered regions lie at residues 101-126, 172-209, 315-339, and 448-468; these read SWKK…TPPT, PQKD…EEED, STPK…NSQR, and GENT…SEEP. The segment covering 200–209 has biased composition (acidic residues); sequence TEEEEEEEED. A Phosphoserine modification is found at Ser-334. Residues 448 to 463 are compositionally biased toward polar residues; sequence GENTANNGYGPQTLNE.

This is an uncharacterized protein from Schizosaccharomyces pombe (strain 972 / ATCC 24843) (Fission yeast).